Reading from the N-terminus, the 462-residue chain is Receptor like protein 29 (462 aa).

Positions 1–26 (MTMKRALPSPSSLLFFFLLITPLFLC) are cleaved as a signal peptide. The Extracellular segment spans residues 27-441 (QENRVSASMP…SQASRYYRSC (415 aa)). N-linked (GlcNAc...) asparagine glycosylation occurs at asparagine 139. LRR repeat units lie at residues 139-164 (NSSL…ISSL), 165-188 (KSLQ…IFSL), 190-212 (SLVH…LGNL), 213-236 (NNLV…ISQL), 238-260 (MLQK…VEKL), 261-284 (RSLS…ISNL), 286-308 (SLQY…LGFL), 309-331 (PKLQ…SYTK), 332-355 (LTNL…GFES), and 357-381 (PHVF…SFLR). Asparagine 334, asparagine 363, and asparagine 416 each carry an N-linked (GlcNAc...) asparagine glycan. The chain crosses the membrane as a helical span at residues 442–462 (FFANALFPFALFLGLHQRWVL).

This sequence belongs to the RLP family.

It localises to the cell membrane. This is Receptor like protein 29 from Arabidopsis thaliana (Mouse-ear cress).